The following is a 603-amino-acid chain: Cholinesterase (603 aa).

A signal peptide spans 1 to 29; sequence MQTQHTKVTQTHFLLWILLLCMPFGKSHT. N-linked (GlcNAc...) asparagine glycosylation is present at asparagine 86. A disulfide bond links cysteine 94 and cysteine 121. Asparagine 135 carries N-linked (GlcNAc...) asparagine glycosylation. Substrate is bound at residue 145 to 146; it reads GG. Catalysis depends on serine 227, which acts as the Acyl-ester intermediate. Serine 227 bears the Phosphoserine mark. A glycan (N-linked (GlcNAc...) asparagine) is linked at asparagine 270. Cysteine 281 and cysteine 292 are oxidised to a cystine. The active-site Charge relay system is the glutamate 354. Residue asparagine 370 is glycosylated (N-linked (GlcNAc...) asparagine). The cysteines at positions 429 and 548 are disulfide-linked. Residue histidine 467 is the Charge relay system of the active site. Residues asparagine 484, asparagine 510, and asparagine 515 are each glycosylated (N-linked (GlcNAc...) asparagine).

This sequence belongs to the type-B carboxylesterase/lipase family. In terms of assembly, homotetramer; disulfide-linked. Dimer of dimers. In terms of tissue distribution, present in most cells except erythrocytes.

The protein localises to the secreted. The catalysed reaction is an acylcholine + H2O = a carboxylate + choline + H(+). Its function is as follows. Esterase with broad substrate specificity. Contributes to the inactivation of the neurotransmitter acetylcholine. Can degrade neurotoxic organophosphate esters. The protein is Cholinesterase (Bche) of Mus musculus (Mouse).